The sequence spans 217 residues: Small ribosomal subunit protein uS11m (217 aa).

Residues 1–59 (MLLQPVWKGCRWTQFVRPIRRWNSTGTNRGVPFSFKDISNQEDITNISYPSSSDSVLTK) constitute a mitochondrion transit peptide.

It belongs to the universal ribosomal protein uS11 family. In terms of assembly, component of the mitochondrial small ribosomal subunit (mt-SSU). Mature yeast 74S mitochondrial ribosomes consist of a small (37S) and a large (54S) subunit. The 37S small subunit contains a 15S ribosomal RNA (15S mt-rRNA) and 34 different proteins. The 54S large subunit contains a 21S rRNA (21S mt-rRNA) and 46 different proteins.

It is found in the mitochondrion. Functionally, component of the mitochondrial ribosome (mitoribosome), a dedicated translation machinery responsible for the synthesis of mitochondrial genome-encoded proteins, including at least some of the essential transmembrane subunits of the mitochondrial respiratory chain. The mitoribosomes are attached to the mitochondrial inner membrane and translation products are cotranslationally integrated into the membrane. The polypeptide is Small ribosomal subunit protein uS11m (MRPS18) (Saccharomyces cerevisiae (strain ATCC 204508 / S288c) (Baker's yeast)).